Reading from the N-terminus, the 258-residue chain is 6-phosphogluconolactonase (258 aa).

The protein belongs to the glucosamine/galactosamine-6-phosphate isomerase family. 6-phosphogluconolactonase subfamily.

It catalyses the reaction 6-phospho-D-glucono-1,5-lactone + H2O = 6-phospho-D-gluconate + H(+). It functions in the pathway carbohydrate degradation; pentose phosphate pathway; D-ribulose 5-phosphate from D-glucose 6-phosphate (oxidative stage): step 2/3. Hydrolysis of 6-phosphogluconolactone to 6-phosphogluconate. The protein is 6-phosphogluconolactonase (pgl) of Chlamydia pneumoniae (Chlamydophila pneumoniae).